We begin with the raw amino-acid sequence, 331 residues long: RNA 3'-terminal phosphate cyclase (331 aa).

Residues Gln-100 and 276 to 280 (HLADQ) each bind ATP. Residue His-301 is the Tele-AMP-histidine intermediate of the active site.

Belongs to the RNA 3'-terminal cyclase family. Type 1 subfamily.

The protein localises to the cytoplasm. It catalyses the reaction a 3'-end 3'-phospho-ribonucleotide-RNA + ATP = a 3'-end 2',3'-cyclophospho-ribonucleotide-RNA + AMP + diphosphate. Catalyzes the conversion of 3'-phosphate to a 2',3'-cyclic phosphodiester at the end of RNA. The mechanism of action of the enzyme occurs in 3 steps: (A) adenylation of the enzyme by ATP; (B) transfer of adenylate to an RNA-N3'P to produce RNA-N3'PP5'A; (C) and attack of the adjacent 2'-hydroxyl on the 3'-phosphorus in the diester linkage to produce the cyclic end product. The biological role of this enzyme is unknown but it is likely to function in some aspects of cellular RNA processing. This Methanosarcina barkeri (strain Fusaro / DSM 804) protein is RNA 3'-terminal phosphate cyclase.